The primary structure comprises 689 residues: Solute carrier family 22 member 23 (689 aa).

Disordered regions lie at residues 1-55 (MAID…PLPA) and 162-188 (TASW…GKGN). N-linked (GlcNAc...) asparagine glycosylation is present at asparagine 24. Residues 165–177 (WGTTSNRSNSSDT) are compositionally biased toward polar residues. 2 helical membrane-spanning segments follow: residues 229-249 (FSLL…ADWV) and 253-273 (PVLL…ALSV). Asparagine 274 is a glycosylation site (N-linked (GlcNAc...) asparagine). Transmembrane regions (helical) follow at residues 283 to 303 (FFEG…RIEL), 310 to 330 (FIIT…MPGL), 339 to 359 (VLQA…SIFP), 466 to 486 (TMAS…KFLG), 489 to 509 (GGLL…LGLL), 541 to 561 (IAFS…SVFF), 572 to 592 (CGGL…APII), and 601 to 621 (FLHH…ILLL).

The protein belongs to the major facilitator (TC 2.A.1) superfamily. Organic cation transporter (TC 2.A.1.19) family.

The protein resides in the membrane. This chain is Solute carrier family 22 member 23 (Slc22a23), found in Mus musculus (Mouse).